Here is a 598-residue protein sequence, read N- to C-terminus: (-)-endo-fenchol synthase, chloroplastic (598 aa).

The transit peptide at Met-1–Val-34 directs the protein to the chloroplast. Residues Asp-351, Asp-355, Asp-495, Thr-499, and Glu-503 each coordinate Mg(2+). The DDXXD motif motif lies at Asp-351–Asp-355.

The protein belongs to the terpene synthase family. It depends on Mg(2+) as a cofactor. Requires Mn(2+) as cofactor.

The protein localises to the plastid. The protein resides in the chloroplast. The catalysed reaction is (2E)-geranyl diphosphate + H2O = (1S,2S,4R)-endo-fenchol + diphosphate. The protein operates within secondary metabolite biosynthesis; terpenoid biosynthesis. Functionally, monoterpene synthase that catalyzes the formation of fenchol from geranyl diphosphate. In Ocimum basilicum (Sweet basil), this protein is (-)-endo-fenchol synthase, chloroplastic (FES).